The primary structure comprises 246 residues: UDP-N-acetyl-D-mannosaminuronic acid transferase (246 aa).

The protein belongs to the glycosyltransferase 26 family.

It carries out the reaction UDP-N-acetyl-alpha-D-mannosaminouronate + N-acetyl-alpha-D-glucosaminyl-di-trans,octa-cis-undecaprenyl diphosphate = beta-D-ManNAcA-(1-&gt;4)-alpha-D-GlcNAc-di-trans,octa-cis-undecaprenyl diphosphate + UDP + H(+). It participates in bacterial outer membrane biogenesis; enterobacterial common antigen biosynthesis. Catalyzes the synthesis of Und-PP-GlcNAc-ManNAcA (Lipid II), the second lipid-linked intermediate involved in enterobacterial common antigen (ECA) synthesis. The sequence is that of UDP-N-acetyl-D-mannosaminuronic acid transferase from Yersinia pestis bv. Antiqua (strain Antiqua).